The chain runs to 254 residues: NAD kinase (254 aa).

Residue Asp-44 is the Proton acceptor of the active site. NAD(+) is bound by residues 44-45, 114-115, Asp-144, Ala-152, 155-160, and Ala-179; these read DG, NE, and TAYNYS.

Belongs to the NAD kinase family. A divalent metal cation is required as a cofactor.

It localises to the cytoplasm. The enzyme catalyses NAD(+) + ATP = ADP + NADP(+) + H(+). In terms of biological role, involved in the regulation of the intracellular balance of NAD and NADP, and is a key enzyme in the biosynthesis of NADP. Catalyzes specifically the phosphorylation on 2'-hydroxyl of the adenosine moiety of NAD to yield NADP. This Cereibacter sphaeroides (strain ATCC 17025 / ATH 2.4.3) (Rhodobacter sphaeroides) protein is NAD kinase.